Reading from the N-terminus, the 430-residue chain is Serine carboxypeptidase-like 13 (430 aa).

The signal sequence occupies residues 1–22 (MSLTLEFLLLLIVLILSHHAHS). Intrachain disulfides connect C81–C319, C240–C254, and C278–C285. N102 carries an N-linked (GlcNAc...) asparagine glycan. S177 is an active-site residue. 2 N-linked (GlcNAc...) asparagine glycosylation sites follow: N299 and N323. D355 is an active-site residue. Residue N371 is glycosylated (N-linked (GlcNAc...) asparagine). H408 is an active-site residue.

It belongs to the peptidase S10 family. In terms of tissue distribution, expression not detected.

Its subcellular location is the secreted. The catalysed reaction is 2 1-O-(trans-sinapoyl)-beta-D-glucose = 1,2-di-O-sinapoyl beta-D-glucose + D-glucose. Its function is as follows. Catalyzes the formation of 1,2-bis-O-sinapoyl beta-D-glucoside. The polypeptide is Serine carboxypeptidase-like 13 (SCPL13) (Arabidopsis thaliana (Mouse-ear cress)).